Here is a 303-residue protein sequence, read N- to C-terminus: Probable 5-dehydro-4-deoxyglucarate dehydratase (303 aa).

Belongs to the DapA family.

It catalyses the reaction 5-dehydro-4-deoxy-D-glucarate + H(+) = 2,5-dioxopentanoate + CO2 + H2O. It functions in the pathway carbohydrate acid metabolism; D-glucarate degradation; 2,5-dioxopentanoate from D-glucarate: step 2/2. The protein is Probable 5-dehydro-4-deoxyglucarate dehydratase of Ectopseudomonas mendocina (strain ymp) (Pseudomonas mendocina).